A 284-amino-acid chain; its full sequence is NADH-cytochrome b5 reductase 1 (284 aa).

The helical transmembrane segment at 7–27 threads the bilayer; it reads KLVVVIVIVVVPLLFKFIIGP. In terms of domain architecture, FAD-binding FR-type spans 38 to 142; it reads NDFQSFPLVE…KGPRGNYHYE (105 aa). FAD is bound by residues 122–137 and 148–180; these read GELKIGDSIQIKGPRG and HLGMIAGGTGIAPMYQIMKAIAMDPHDTTKVSL.

The protein belongs to the flavoprotein pyridine nucleotide cytochrome reductase family. Monomer. Component of the 2-(3-amino-3-carboxypropyl)histidine synthase complex composed of DPH1, DPH2, KTI11/DPH3 and a NADH-dependent reductase, predominantly CBR1. Interacts with KTI11/DPH3. Interacts with STE20. It depends on FAD as a cofactor.

The protein localises to the mitochondrion outer membrane. It catalyses the reaction 2 Fe(III)-[cytochrome b5] + NADH = 2 Fe(II)-[cytochrome b5] + NAD(+) + H(+). The catalysed reaction is 2 Fe(3+)-[Dph3] + NADH = 2 Fe(2+)-[Dph3] + NAD(+) + H(+). It participates in protein modification; peptidyl-diphthamide biosynthesis. Its activity is regulated as follows. Competitively inhibited by NAD(+). Inhibited by mercurials such as p-chloromercuribenzoate (PCMB) and HgCl(2). Enzymatic activity increases under anaerobic conditions. Functionally, NADH-dependent reductase for KTI11/DPH3 and cytochrome b5. Required for the first step of diphthamide biosynthesis, a post-translational modification of histidine which occurs in elongation factor 2. DPH1 and DPH2 transfer a 3-amino-3-carboxypropyl (ACP) group from S-adenosyl-L-methionine (SAM) to a histidine residue, the reaction is assisted by a reduction system comprising KTI11/DPH3 and a NADH-dependent reductase, predominantly CBR1. By reducing KTI11/DPH3, also involved in the formation of the tRNA wobble base modification mcm5s 2U (5-methoxycarbonylmethyl-2-thiouridine), mediated by the elongator complex. The cytochrome b5/NADH cytochrome b5 reductase electron transfer system supports the catalytic activity of several sterol biosynthetic enzymes. Plays a role in bud morphology. The protein is NADH-cytochrome b5 reductase 1 (CBR1) of Saccharomyces cerevisiae (strain ATCC 204508 / S288c) (Baker's yeast).